A 127-amino-acid chain; its full sequence is Small ribosomal subunit protein bS6 (127 aa).

The protein belongs to the bacterial ribosomal protein bS6 family.

Binds together with bS18 to 16S ribosomal RNA. This Sulfurovum sp. (strain NBC37-1) protein is Small ribosomal subunit protein bS6.